The primary structure comprises 294 residues: DNA adenine methyltransferase YhdJ (294 aa).

The disordered stretch occupies residues 275 to 294; that stretch reads TGNLSKRSRLSEVDPDLITK. Residues 283–294 are compositionally biased toward basic and acidic residues; sequence RLSEVDPDLITK.

It belongs to the N(4)/N(6)-methyltransferase family.

It carries out the reaction a 2'-deoxyadenosine in DNA + S-adenosyl-L-methionine = an N(6)-methyl-2'-deoxyadenosine in DNA + S-adenosyl-L-homocysteine + H(+). Functionally, a beta subtype methylase, recognizes the double-stranded sequence 5'-ATGCAT-3' and methylates A-5. This chain is DNA adenine methyltransferase YhdJ (yhdJ), found in Escherichia coli (strain K12).